The following is a 352-amino-acid chain: Holliday junction branch migration complex subunit RuvB (352 aa).

The interval 13–201 (LPLRKKELRL…FGISQKIEFY (189 aa)) is large ATPase domain (RuvB-L). ATP-binding positions include Arg41, Gly82, Lys85, Thr86, Thr87, 148 to 150 (EDF), Arg191, Tyr201, and Arg238. Thr86 is a Mg(2+) binding site. A small ATPAse domain (RuvB-S) region spans residues 202 to 273 (NYDELKQILL…LIKKALNSYQ (72 aa)). The segment at 276–352 (DKGLDSLDRH…KYIDSKNDDF (77 aa)) is head domain (RuvB-H). Positions 330 and 335 each coordinate DNA.

The protein belongs to the RuvB family. Homohexamer. Forms an RuvA(8)-RuvB(12)-Holliday junction (HJ) complex. HJ DNA is sandwiched between 2 RuvA tetramers; dsDNA enters through RuvA and exits via RuvB. An RuvB hexamer assembles on each DNA strand where it exits the tetramer. Each RuvB hexamer is contacted by two RuvA subunits (via domain III) on 2 adjacent RuvB subunits; this complex drives branch migration. In the full resolvosome a probable DNA-RuvA(4)-RuvB(12)-RuvC(2) complex forms which resolves the HJ.

It is found in the cytoplasm. It carries out the reaction ATP + H2O = ADP + phosphate + H(+). In terms of biological role, the RuvA-RuvB-RuvC complex processes Holliday junction (HJ) DNA during genetic recombination and DNA repair, while the RuvA-RuvB complex plays an important role in the rescue of blocked DNA replication forks via replication fork reversal (RFR). RuvA specifically binds to HJ cruciform DNA, conferring on it an open structure. The RuvB hexamer acts as an ATP-dependent pump, pulling dsDNA into and through the RuvAB complex. RuvB forms 2 homohexamers on either side of HJ DNA bound by 1 or 2 RuvA tetramers; 4 subunits per hexamer contact DNA at a time. Coordinated motions by a converter formed by DNA-disengaged RuvB subunits stimulates ATP hydrolysis and nucleotide exchange. Immobilization of the converter enables RuvB to convert the ATP-contained energy into a lever motion, pulling 2 nucleotides of DNA out of the RuvA tetramer per ATP hydrolyzed, thus driving DNA branch migration. The RuvB motors rotate together with the DNA substrate, which together with the progressing nucleotide cycle form the mechanistic basis for DNA recombination by continuous HJ branch migration. Branch migration allows RuvC to scan DNA until it finds its consensus sequence, where it cleaves and resolves cruciform DNA. In Prochlorococcus marinus (strain MIT 9301), this protein is Holliday junction branch migration complex subunit RuvB.